The chain runs to 388 residues: Chorismate synthase (388 aa).

Arginine 39 and arginine 45 together coordinate NADP(+). FMN is bound by residues 130–132 (RSS), 251–252 (NA), alanine 296, 311–315 (KPIPT), and arginine 337.

Belongs to the chorismate synthase family. Homotetramer. It depends on FMNH2 as a cofactor.

It carries out the reaction 5-O-(1-carboxyvinyl)-3-phosphoshikimate = chorismate + phosphate. Its pathway is metabolic intermediate biosynthesis; chorismate biosynthesis; chorismate from D-erythrose 4-phosphate and phosphoenolpyruvate: step 7/7. In terms of biological role, catalyzes the anti-1,4-elimination of the C-3 phosphate and the C-6 proR hydrogen from 5-enolpyruvylshikimate-3-phosphate (EPSP) to yield chorismate, which is the branch point compound that serves as the starting substrate for the three terminal pathways of aromatic amino acid biosynthesis. This reaction introduces a second double bond into the aromatic ring system. The polypeptide is Chorismate synthase (Streptococcus equi subsp. zooepidemicus (strain H70)).